The chain runs to 293 residues: ATP synthase gamma chain (293 aa).

Belongs to the ATPase gamma chain family. As to quaternary structure, F-type ATPases have 2 components, CF(1) - the catalytic core - and CF(0) - the membrane proton channel. CF(1) has five subunits: alpha(3), beta(3), gamma(1), delta(1), epsilon(1). CF(0) has three main subunits: a, b and c.

The protein resides in the cell membrane. Produces ATP from ADP in the presence of a proton gradient across the membrane. The gamma chain is believed to be important in regulating ATPase activity and the flow of protons through the CF(0) complex. This chain is ATP synthase gamma chain, found in Streptococcus sanguinis.